We begin with the raw amino-acid sequence, 249 residues long: Transcriptional activator protein EsaR (249 aa).

The HTH luxR-type domain maps to 174-239 (QSADKTIFSS…QAIRLGVELD (66 aa)). Positions 198–217 (YAEIAAITGISVSTVKFHIK) form a DNA-binding region, H-T-H motif.

This sequence belongs to the autoinducer-regulated transcriptional regulatory protein family.

Functions as a potential OhlL-responsive transcriptional regulator. This chain is Transcriptional activator protein EsaR (esaR), found in Pantoea stewartii subsp. stewartii (Erwinia stewartii).